The following is a 438-amino-acid chain: Serine/threonine exchanger SteT (438 aa).

At 1 to 11 (MHTEDNGLKKE) the chain is on the cytoplasmic side. A helical transmembrane segment spans residues 12–32 (IGLLFALTLVIGTIIGSGVFM). The Extracellular portion of the chain corresponds to 33–45 (KPGAVLAYSGDSK). The helical transmembrane segment at 46–66 (MALFAWLLGGILTLAGGLTIA) threads the bilayer. At 67-98 (EIGTQIPKTGGLYTYLEEVYGEFWGFLCGWVQ) the chain is on the cytoplasmic side. Residues 99 to 119 (IIIYGPAIIGALGLYFGSLMA) traverse the membrane as a helical segment. Topologically, residues 120–126 (NLFGWGS) are extracellular. A helical membrane pass occupies residues 127–147 (GLSKVIGIIAVLFLCVINIIG). Residues 148-151 (TKYG) are Cytoplasmic-facing. A helical transmembrane segment spans residues 152 to 172 (GFVQTLTTIGKLIPIACIIVF). At 173 to 193 (GLWKGDQHIFTAVNESISDMN) the chain is on the extracellular side. A helical transmembrane segment spans residues 194–214 (FGAAILATLFAYDGWILLAAL). Topologically, residues 215–230 (GGEMKNPEKLLPRAMT) are cytoplasmic. Residues 231–251 (GGLLIVTAIYIFINFALLHIL) form a helical membrane-spanning segment. The Extracellular segment spans residues 252 to 269 (SANEIVTLGENATSTAAT). A helical transmembrane segment spans residues 270–290 (MLFGSIGGKLISVGIIVSIFG). Residues 291-327 (CLNGKVLSFPRVSFAMAERKQLPFAEKLSHVHPSFRT) lie on the Cytoplasmic side of the membrane. Residues 328–348 (PWIAISFQIALALIMMLISNP) traverse the membrane as a helical segment. Topologically, residues 349 to 352 (DKLS) are extracellular. The helical transmembrane segment at 353 to 373 (EISIFMIYIFYVMAFFAVFIL) threads the bilayer. At 374–388 (RKRAKGEKRAYSVPL) the chain is on the cytoplasmic side. Residues 389-409 (YPFMPILAIAGSFFVLGSTLI) form a helical membrane-spanning segment. Residues 410-411 (TD) lie on the Extracellular side of the membrane. A helical membrane pass occupies residues 412–432 (TMSCGLSILIGLAGLPVYYGM). Residues 433–438 (KKRKAS) lie on the Cytoplasmic side of the membrane.

It belongs to the amino acid-polyamine-organocation (APC) superfamily. L-type amino acid transporter (LAT) (TC 2.A.3.8) family. As to quaternary structure, monomer.

Its subcellular location is the cell membrane. Its function is as follows. Exhibits an obligate exchange activity for serine, threonine and aromatic amino acids. The protein is Serine/threonine exchanger SteT (steT) of Bacillus subtilis (strain 168).